A 569-amino-acid polypeptide reads, in one-letter code: Glucose-6-phosphate isomerase, cytosolic 2A (569 aa).

The active-site Proton donor is Glu360. Catalysis depends on residues His391 and Lys516.

It belongs to the GPI family. Homodimer.

The protein resides in the cytoplasm. It catalyses the reaction alpha-D-glucose 6-phosphate = beta-D-fructose 6-phosphate. It participates in carbohydrate degradation; glycolysis; D-glyceraldehyde 3-phosphate and glycerone phosphate from D-glucose: step 2/4. This Clarkia lewisii (Farewell-to-spring) protein is Glucose-6-phosphate isomerase, cytosolic 2A (PGIC2-A).